The sequence spans 232 residues: uncharacterized protein (232 aa).

A helical transmembrane segment spans residues 209-229; that stretch reads ATISTPALGYAYFLFTLTLVF.

The protein localises to the host membrane. This is an uncharacterized protein from Saccharolobus islandicus (Sulfolobus islandicus).